The following is a 286-amino-acid chain: Carbohydrate-binding domain-containing protein Cthe_2159 (286 aa).

Residues 1–20 form the signal peptide; the sequence is MSIKKLILAASILTTLALTG. Cys21 carries the N-palmitoyl cysteine lipid modification. Residue Cys21 is the site of S-diacylglycerol cysteine attachment. Residues 124-225 form a polygalacturonic acid-binding region; it reads GKDNVLTDAE…GIKVENTEEP (102 aa). Residues Arg152, Asp153, Asp154, Asn177, Asp178, Asp215, Asp243, Asp244, and Asp247 each contribute to the Ca(2+) site.

As to quaternary structure, monomer.

Its subcellular location is the cell membrane. In terms of biological role, binds cellulosic and pectic substrates. Displays no enzyme activity (in vitro). The chain is Carbohydrate-binding domain-containing protein Cthe_2159 from Acetivibrio thermocellus (strain ATCC 27405 / DSM 1237 / JCM 9322 / NBRC 103400 / NCIMB 10682 / NRRL B-4536 / VPI 7372) (Clostridium thermocellum).